Reading from the N-terminus, the 199-residue chain is Large ribosomal subunit protein bL25 (199 aa).

Belongs to the bacterial ribosomal protein bL25 family. CTC subfamily. As to quaternary structure, part of the 50S ribosomal subunit; part of the 5S rRNA/L5/L18/L25 subcomplex. Contacts the 5S rRNA. Binds to the 5S rRNA independently of L5 and L18.

Functionally, this is one of the proteins that binds to the 5S RNA in the ribosome where it forms part of the central protuberance. This chain is Large ribosomal subunit protein bL25, found in Chlorobaculum tepidum (strain ATCC 49652 / DSM 12025 / NBRC 103806 / TLS) (Chlorobium tepidum).